The following is an 825-amino-acid chain: Translation initiation factor IF-2 (825 aa).

Composition is skewed to basic and acidic residues over residues Met1–Lys19, Arg35–Arg45, Leu70–Lys98, and Lys113–Ala122. Positions Met1–Glu239 are disordered. Low complexity predominate over residues Pro158–Ser169. Basic residues predominate over residues Gly181–Arg191. Residues Gln194–Arg208 show a composition bias toward polar residues. A compositionally biased stretch (basic residues) spans Gln211–Gln220. Residues Val326 to Lys495 enclose the tr-type G domain. Residues Gly335–Thr342 form a G1 region. Gly335 to Thr342 lines the GTP pocket. The G2 stretch occupies residues Gly360 to Asn364. The G3 stretch occupies residues Asp381–Gly384. GTP-binding positions include Asp381 to His385 and Asn435 to Asp438. Residues Asn435–Asp438 are G4. The tract at residues Ser471–Lys473 is G5.

This sequence belongs to the TRAFAC class translation factor GTPase superfamily. Classic translation factor GTPase family. IF-2 subfamily.

It is found in the cytoplasm. In terms of biological role, one of the essential components for the initiation of protein synthesis. Protects formylmethionyl-tRNA from spontaneous hydrolysis and promotes its binding to the 30S ribosomal subunits. Also involved in the hydrolysis of GTP during the formation of the 70S ribosomal complex. The chain is Translation initiation factor IF-2 from Lactobacillus delbrueckii subsp. bulgaricus (strain ATCC BAA-365 / Lb-18).